The chain runs to 801 residues: tRNA(Met) cytidine acetyltransferase TmcA (801 aa).

Residues Gln-228, 256–265 (GRGKSSAVGL), and Arg-412 each bind ATP. The N-acetyltransferase domain occupies 457-637 (EELFLKNEEE…YTVIVVKPLS (181 aa)). Residues 562–564 (IAT), 569–575 (MGKGLGS), and Glu-602 each bind acetyl-CoA.

It belongs to the RNA cytidine acetyltransferase family. TmcA subfamily.

It localises to the cytoplasm. It catalyses the reaction cytidine(34) in elongator tRNA(Met) + acetyl-CoA + ATP + H2O = N(4)-acetylcytidine(34) in elongator tRNA(Met) + ADP + phosphate + CoA + H(+). In terms of biological role, catalyzes the formation of N(4)-acetylcytidine (ac(4)C) at the wobble position of tRNA(Met), by using acetyl-CoA as an acetyl donor and ATP (or GTP). This Thermofilum pendens (strain DSM 2475 / Hrk 5) protein is tRNA(Met) cytidine acetyltransferase TmcA.